The chain runs to 404 residues: Argininosuccinate synthase (404 aa).

9-17 is a binding site for ATP; that stretch reads AYSGGLDTS. An L-citrulline-binding site is contributed by tyrosine 86. Glycine 116 is a binding site for ATP. Residues threonine 118, asparagine 122, and aspartate 123 each contribute to the L-aspartate site. Residue asparagine 122 coordinates L-citrulline. L-citrulline contacts are provided by arginine 126, serine 174, serine 183, glutamate 259, and tyrosine 271.

It belongs to the argininosuccinate synthase family. Type 1 subfamily. Homotetramer.

The protein localises to the cytoplasm. The catalysed reaction is L-citrulline + L-aspartate + ATP = 2-(N(omega)-L-arginino)succinate + AMP + diphosphate + H(+). Its pathway is amino-acid biosynthesis; L-arginine biosynthesis; L-arginine from L-ornithine and carbamoyl phosphate: step 2/3. In Listeria innocua serovar 6a (strain ATCC BAA-680 / CLIP 11262), this protein is Argininosuccinate synthase.